Consider the following 212-residue polypeptide: Pyridoxine/pyridoxamine 5'-phosphate oxidase (212 aa).

Substrate is bound by residues 8 to 11 (RKNY) and K66. FMN contacts are provided by residues 61-66 (RIVLIK), 76-77 (FT), R82, K83, and Q105. Residues Y123, R127, and S131 each contribute to the substrate site. Residues 140–141 (QS) and W184 contribute to the FMN site. 190–192 (RLH) serves as a coordination point for substrate. R194 is an FMN binding site.

It belongs to the pyridoxamine 5'-phosphate oxidase family. As to quaternary structure, homodimer. The cofactor is FMN.

It carries out the reaction pyridoxamine 5'-phosphate + O2 + H2O = pyridoxal 5'-phosphate + H2O2 + NH4(+). The catalysed reaction is pyridoxine 5'-phosphate + O2 = pyridoxal 5'-phosphate + H2O2. It functions in the pathway cofactor metabolism; pyridoxal 5'-phosphate salvage; pyridoxal 5'-phosphate from pyridoxamine 5'-phosphate: step 1/1. It participates in cofactor metabolism; pyridoxal 5'-phosphate salvage; pyridoxal 5'-phosphate from pyridoxine 5'-phosphate: step 1/1. In terms of biological role, catalyzes the oxidation of either pyridoxine 5'-phosphate (PNP) or pyridoxamine 5'-phosphate (PMP) into pyridoxal 5'-phosphate (PLP). The sequence is that of Pyridoxine/pyridoxamine 5'-phosphate oxidase from Paraburkholderia phymatum (strain DSM 17167 / CIP 108236 / LMG 21445 / STM815) (Burkholderia phymatum).